The primary structure comprises 275 residues: tRNA pseudouridine synthase A (275 aa).

The active-site Nucleophile is D72. Y133 lines the substrate pocket.

This sequence belongs to the tRNA pseudouridine synthase TruA family. Homodimer.

The catalysed reaction is uridine(38/39/40) in tRNA = pseudouridine(38/39/40) in tRNA. In terms of biological role, formation of pseudouridine at positions 38, 39 and 40 in the anticodon stem and loop of transfer RNAs. The protein is tRNA pseudouridine synthase A of Gluconobacter oxydans (strain 621H) (Gluconobacter suboxydans).